Reading from the N-terminus, the 488-residue chain is Poly(3-hydroxybutyrate) depolymerase (488 aa).

An N-terminal signal peptide occupies residues 1–27 (MVRRLWRRIAGWLAACVAILCAFPLHA). The active-site Charge relay system is S166. Positions 346–428 (APTGLAVTAT…AAVSATTKSA (83 aa)) constitute a Fibronectin type-III domain.

The protein belongs to the AB hydrolase superfamily. Lipase family.

The protein localises to the secreted. The enzyme catalyses [(3R)-hydroxybutanoate](n) + H2O = [(3R)-hydroxybutanoate](n-2) + (3R)-hydroxybutanoate dimer + H(+). It catalyses the reaction [(3R)-hydroxybutanoate](n) + H2O = [(3R)-hydroxybutanoate](n-3) + (3R)-hydroxybutanoate trimer + H(+). The catalysed reaction is [(3R)-hydroxybutanoate](n) + H2O = [(3R)-hydroxybutanoate](n-1) + (R)-3-hydroxybutanoate + H(+). It carries out the reaction [(3R)-hydroxybutanoate](n) + H2O = [(3R)-hydroxybutanoate](n-5) + (3R)-hydroxybutanoate pentamer + H(+). The enzyme catalyses [(3R)-hydroxybutanoate](n) + H2O = [(3R)-hydroxybutanoate](n-4) + (3R)-hydroxybutanoate tetramer + H(+). In terms of biological role, this protein degrades water-insoluble and water-soluble PHB to monomeric D(-)-3-hydroxybutyrate. This is Poly(3-hydroxybutyrate) depolymerase from Ralstonia pickettii (Burkholderia pickettii).